A 120-amino-acid chain; its full sequence is MLRFTDEHEWLRLDGDVATVGITAHAAEQLGDLVFVELPKVGAKLTKGEAAAVVESVKAASDVYAPLSGEVTEVNEAAVADPASVGTDPQGDGWLYRLKLDDASAMDGLMDEAAYAAFAK.

The 83-residue stretch at 17-99 (VATVGITAHA…QGDGWLYRLK (83 aa)) folds into the Lipoyl-binding domain. At Lys-58 the chain carries N6-lipoyllysine.

It belongs to the GcvH family. The glycine cleavage system is composed of four proteins: P, T, L and H. It depends on (R)-lipoate as a cofactor.

Its function is as follows. The glycine cleavage system catalyzes the degradation of glycine. The H protein shuttles the methylamine group of glycine from the P protein to the T protein. The polypeptide is Glycine cleavage system H protein (Methylorubrum extorquens (strain PA1) (Methylobacterium extorquens)).